Consider the following 888-residue polypeptide: 3-hydroxy-3-methylglutaryl-coenzyme A reductase (888 aa).

Residues 1-9 (MLSRLFRMH) lie on the Cytoplasmic side of the membrane. A helical transmembrane segment spans residues 10 to 39 (GLFVASHPWEVIVGTVTLTICMMSMNMFTG). Residues 40 to 56 (NDKICGWNYECPKFEED) are Lumenal-facing. Residues 57-78 (VLSSDIIILTITRCIAILYIYF) traverse the membrane as a helical segment. The SSD domain maps to 61–218 (DIIILTITRC…MTFFPACVSL (158 aa)). An INSIG-binding motif motif is present at residues 75-78 (YIYF). Topologically, residues 79–89 (QFQNLRQLGSK) are cytoplasmic. K89 participates in a covalent cross-link: Glycyl lysine isopeptide (Lys-Gly) (interchain with G-Cter in ubiquitin). A helical membrane pass occupies residues 90–114 (YILGIAGLFTIFSSFVFSTVVIHFL). The Lumenal segment spans residues 115–123 (DKELTGLNE). Residues 124 to 149 (ALPFFLLLIDLSRASALAKFALSSNS) traverse the membrane as a helical segment. Over 150 to 159 (QDEVRENIAR) the chain is Cytoplasmic. A helical transmembrane segment spans residues 160–187 (GMAILGPTFTLDALVECLVIGVGTMSGV). Over 188–191 (RQLE) the chain is Lumenal. Residues 192 to 220 (IMCCFGCMSVLANYFVFMTFFPACVSLVL) form a helical membrane-spanning segment. The Cytoplasmic segment spans residues 221-248 (ELSRESREGRPIWQLSHFARVLEEEENK). K248 participates in a covalent cross-link: Glycyl lysine isopeptide (Lys-Gly) (interchain with G-Cter in ubiquitin). Residues 249–275 (PNPVTQRVKMIMSLGLVLVHAHSRWIA) traverse the membrane as a helical segment. Residues 276 to 314 (DPSPQNSTADNSKVSLGLDENVSKRIEPSVSLWQFYLSK) lie on the Lumenal side of the membrane. N-linked (GlcNAc...) asparagine glycans are attached at residues N281 and N296. A helical transmembrane segment spans residues 315 to 339 (MISMDIEQVITLSLALLLAVKYIFF). Topologically, residues 340–888 (EQAETESTLS…LEGACTKKAA (549 aa)) are cytoplasmic. Catalysis depends on charge relay system residues E559, K691, and D767. Residue H866 is the Proton donor of the active site. Residue S872 is modified to Phosphoserine; by AMPK.

It belongs to the HMG-CoA reductase family. Homotetramer. Homodimer. Interacts (via its SSD) with INSIG1; the interaction, accelerated by sterols, leads to the recruitment of HMGCR to AMFR/gp78 for its ubiquitination by the sterol-mediated ERAD pathway. Interacts with UBIAD1. Post-translationally, undergoes sterol-mediated ubiquitination and ER-associated degradation (ERAD). Accumulation of sterols in the endoplasmic reticulum (ER) membrane, triggers binding of the reductase to the ER membrane protein INSIG1 or INSIG2. The INSIG1 binding leads to the recruitment of the ubiquitin ligase, AMFR/gp78, RNF139 or RNF145, initiating ubiquitination of the reductase. The ubiquitinated reductase is then extracted from the ER membrane and delivered to cytosolic 26S proteosomes by a mechanism probably mediated by the ATPase Valosin-containing protein VCP/p97. The INSIG2-binding leads to the recruitment of the ubiquitin ligase RNF139, initiating ubiquitination of the reductase. Lys-248 is the main site of ubiquitination. Ubiquitination is enhanced by the presence of a geranylgeranylated protein. N-glycosylated. Deglycosylated by NGLY1 on release from the endoplasmic reticulum (ER) in a sterol-mediated manner. In terms of processing, phosphorylated. Phosphorylation at Ser-872 reduces the catalytic activity.

The protein localises to the endoplasmic reticulum membrane. It is found in the peroxisome membrane. The catalysed reaction is (R)-mevalonate + 2 NADP(+) + CoA = (3S)-3-hydroxy-3-methylglutaryl-CoA + 2 NADPH + 2 H(+). The protein operates within metabolic intermediate biosynthesis; (R)-mevalonate biosynthesis; (R)-mevalonate from acetyl-CoA: step 3/3. Regulated by a negative feedback mechanism through sterols and non-sterol metabolites derived from mevalonate. Phosphorylation at Ser-872 down-regulates the catalytic activity. Its function is as follows. Catalyzes the conversion of (3S)-hydroxy-3-methylglutaryl-CoA (HMG-CoA) to mevalonic acid, the rate-limiting step in the synthesis of cholesterol and other isoprenoids, thus plays a critical role in cellular cholesterol homeostasis. The protein is 3-hydroxy-3-methylglutaryl-coenzyme A reductase (HMGCR) of Oryctolagus cuniculus (Rabbit).